A 205-amino-acid chain; its full sequence is N-(5'-phosphoribosyl)anthranilate isomerase (205 aa).

Belongs to the TrpF family.

It carries out the reaction N-(5-phospho-beta-D-ribosyl)anthranilate = 1-(2-carboxyphenylamino)-1-deoxy-D-ribulose 5-phosphate. Its pathway is amino-acid biosynthesis; L-tryptophan biosynthesis; L-tryptophan from chorismate: step 3/5. The chain is N-(5'-phosphoribosyl)anthranilate isomerase from Clostridium acetobutylicum (strain ATCC 824 / DSM 792 / JCM 1419 / IAM 19013 / LMG 5710 / NBRC 13948 / NRRL B-527 / VKM B-1787 / 2291 / W).